The following is a 237-amino-acid chain: Riboflavin kinase (237 aa).

The tract at residues 1–101 is unknown; sequence MRLKIKAIWV…SRIFSSEPDV (101 aa). Positions 102–237 are riboflavin kinase; it reads LELEGNVLKG…VKKQGMEGQK (136 aa). 111–116 provides a ligand contact to CDP; the sequence is GLGEGQ. Residues T140 and N142 each contribute to the Mg(2+) site. FMN contacts are provided by T197 and E205. 210–213 contacts CDP; the sequence is VKLR.

Belongs to the archaeal riboflavin kinase family. Mg(2+) is required as a cofactor.

It carries out the reaction riboflavin + CTP = CDP + FMN + H(+). It participates in cofactor biosynthesis; FMN biosynthesis; FMN from riboflavin (CTP route): step 1/1. Functionally, catalyzes the CTP-dependent phosphorylation of riboflavin (vitamin B2) to form flavin mononucleotide (FMN). The polypeptide is Riboflavin kinase (ribK) (Methanosarcina acetivorans (strain ATCC 35395 / DSM 2834 / JCM 12185 / C2A)).